Consider the following 2032-residue polypeptide: MGDDSEWLKLPVDQKCEHKLWKARLSGYEEALKIFQKIKDEKSPEWSKYLGLIKKFVTDSNAVVQLKGLEAALVYVENAHVAGKTTGEVVSGVVSKVFNQPKAKAKELGIEICLMYVEIEKGESVQEELLKGLDNKNPKIIVACIETLRKALSEFGSKIISLKPIIKVLPKLFESRDKAVRDEAKLFAIEIYRWNRDAVKHTLQNINSVQLKELEEEWVKLPTGAPKPSRFLRSQQELEAKLEQQQSAGGDAEGGGDDGDEVPQVDAYELLDAVEILSKLPKDFYDKIEAKKWQERKEALEAVEVLVKNPKLEAGDYADLVKALKKVVGKDTNVMLVALAAKCLTGLAVGLRKKFGQYAGHVVPTILEKFKEKKPQVVQALQEAIDAIFLTTTLQNISEDVLAVMDNKNPTIKQQTSLFIARSFRHCTSSTLPKSLLKPFCAALLKHINDSAPEVRDAAFEALGTALKVVGEKSVNPFLADVDKLKLDRIKECSEKVELVHGKKSGLATEKKESKPLPGRAAASGAAGDKDTKDVSGPKPGPLKKTPTAKAGGPSKKGKTTAPGGSASAGTKNKKGLETKEIVEPELSIEVCEEKASAVLPPTCIQLLDSSNWKERLACMEEFQKAVELMERTEMPCQALVKMLAKKPGWKETNFQVMQMKLHIVALIAQKGNFSKTSAQIVLDGLVDKIGDVKCGNNAKEAMTAIAEACMLPWTAEQVMSMAFSQKNPKNQSETLNWLSNAIKEFGFSELNVKAFISNVKTALAATNPAVRTSAITLLGVMYLYVGPSLRMIFEDEKPALLSQIDAEFQKMQGQSPPAPTRGIAKHSTSATDEGEDGEEPGEGGNDVVDLLPRIEISDKITSELVSKIGDKNWKIRKEGLDEVAGIINEAKFIQPNIGELPTALKGRLNDSNKILVQQTLNILQQLAVAMGANIRQHVKNLGIPVITVLGDSKNNVRAAALATVNAWAEQTGMKEWLEGEDLSEELKKENPFLRQELLGWLAEKLPTLRSTPTDLILCVPHLYSCLKDRNGDVRKKAQDALPFFMMHLGYEKMAKATGKLKPTSKDQVLAMLEKAKANMPSKPAAPAKAMSKPMGGSAPAKTQPIPAPVEDSVSSTIEAKPDLKKAKAPGVSSKAKSVQGKKVPSKTTLKEDDDKSGPIFIVVPNGKEQRMRDEKGLKVLKWNFTTPRDEYIEQLKTQMSTCVAKWLQDEMFHSDFQHHNKALAVMVDHLESEKDGVISCLDLILKWLTLRFFDTNTSVLMKALEYLKLLFTLLSEEEYHLTENEASSFIPYLILKVGEPKDVIRKDVRAILNRMCLVYPASKMFPFIMEGTKSKNSKQRAECLEELGCLIESYGMNVCQPTPGKALKEIAIHIGDRDNAVRNAALNTIVTVYNVHGDQVFKLIGNLSEKDMSMLEERIKRSAKRPSAAPVKQAEEKPQRTQNINSNANMLRKGPAEDMSSKLNQARSLSGHPEAAQMVRREFQLDLDEIENDNGTVRCEMPELVQHKLDDIFEPVLIPEPKIRAVSPHFDDMHSNTASTINFIISQVASGDINTSIQALTQIDEVLRQEDKAEAMSGHIDQFLIATFMQLRLIYSTHMADEKLDKDEIIKLYSCIIGNMISLFQIESLAREASTGVLKDLMHGLITLMLDSRIEDLEEGQQVIRSVNLLVVKVLEKSDQTNILSALLVLLQDSLLATASSPKFSELVMKCLWRMVRLLPDTINSINLDRILLDIHIFMKVFPKEKLKQCKSEFPIRTLKTLLHTLCKLKGPKILDHLTMIDNKNESELEAHLCRMMKHSMDQTGSKSDKETEKGASRIDEKSSKAKVNDFLAEIFKKIGSKENTKEGLAELYEYKKKYSDTDIEPFLKNSSQFFQSYVERGLRVIEMERESKGRIPTSTGISPQMEVTCVPTPTSTVSSLGNTNGEEVGPSVYLERLKILRQRCGLDNTKQDDRPPLTSLLSKPAIPPVASSTDMLHSKLSQLRESREQHQHSDLDSNQTHSAGTMTSSSSTTNIDDLKKRLERIKSSRK.

TOG stretches follow at residues 1–223 (MGDD…KLPT), 268–502 (YELL…LVHG), and 588–817 (SIEV…GQSP). Lys48 bears the N6-acetyllysine mark. 3 HEAT repeats span residues 159 to 197 (IISL…WNRD), 356 to 394 (GQYA…TTTL), and 434 to 472 (KSLL…VVGE). The disordered stretch occupies residues 501 to 579 (HGKKSGLATE…GTKNKKGLET (79 aa)). The HEAT 4 repeat unit spans residues 750–788 (ELNVKAFISNVKTALAATNPAVRTSAITLLGVMYLYVGP). The tract at residues 811–848 (KMQGQSPPAPTRGIAKHSTSATDEGEDGEEPGEGGNDV) is disordered. A Phosphoserine modification is found at Ser816. Positions 833-842 (DEGEDGEEPG) are enriched in acidic residues. TOG stretches follow at residues 853–1081 (PRIE…ANMP) and 1193–1428 (IEQL…KRPS). HEAT repeat units lie at residues 855–893 (IEIS…EAKF), 936–974 (RQHV…QTGM), and 1013–1051 (PTDL…HLGY). Residues 1078–1095 (ANMPSKPAAPAKAMSKPM) are compositionally biased toward low complexity. Positions 1078-1156 (ANMPSKPAAP…KTTLKEDDDK (79 aa)) are disordered. HEAT repeat units lie at residues 1284 to 1322 (ENEA…VYPA), 1324 to 1357 (KMFP…SYGM), and 1361 to 1399 (QPTP…VHGD). Residues 1420 to 1459 (IKRSAKRPSAAPVKQAEEKPQRTQNINSNANMLRKGPAED) are disordered. Residues 1441 to 1450 (RTQNINSNAN) are compositionally biased toward polar residues. Phosphoserine is present on Ser1469. The interval 1801–1822 (SMDQTGSKSDKETEKGASRIDE) is disordered. Positions 1808–1822 (KSDKETEKGASRIDE) are enriched in basic and acidic residues. Position 1861 is a phosphoserine (Ser1861). Disordered regions lie at residues 1893 to 1926 (SKGR…GNTN) and 1948 to 2032 (LDNT…SSRK). The segment covering 1909 to 1921 (VTCVPTPTSTVSS) has biased composition (low complexity). The tract at residues 1932-1957 (PSVYLERLKILRQRCGLDNTKQDDRP) is interaction with TACC3. Residues 1972–1983 (ASSTDMLHSKLS) are compositionally biased toward polar residues. Residues 1984 to 1997 (QLRESREQHQHSDL) show a composition bias toward basic and acidic residues. Positions 2002 to 2015 (THSAGTMTSSSSTT) are enriched in low complexity. Residues 2018–2032 (DDLKKRLERIKSSRK) show a composition bias toward basic and acidic residues.

It belongs to the TOG/XMAP215 family. As to quaternary structure, interacts with TACC1. Interacts with HNRNPA2B1. Interacts with TACC3 independently of clathrin. Interacts with TACC3 and clathrin forming the TACC3/ch-TOG/clathrin complex located at spindle inter-microtubules bridges. Interacts with NDC80; indicative for an association with the NDC80 complex. Interacts with SLAIN2. Interacts with SLAIN1.

It localises to the cytoplasm. The protein resides in the cytoskeleton. The protein localises to the microtubule organizing center. It is found in the centrosome. Its subcellular location is the spindle pole. It localises to the spindle. The protein resides in the chromosome. The protein localises to the centromere. It is found in the kinetochore. Functionally, binds to the plus end of microtubules and regulates microtubule dynamics and microtubule organization. Acts as a processive microtubule polymerase. Promotes cytoplasmic microtubule nucleation and elongation. Plays a major role in organizing spindle poles. In spindle formation protects kinetochore microtubules from depolymerization by KIF2C and has an essential role in centrosomal microtubule assembly independently of KIF2C activity. Contributes to centrosome integrity. Acts as a component of the TACC3/ch-TOG/clathrin complex proposed to contribute to stabilization of kinetochore fibers of the mitotic spindle by acting as inter-microtubule bridge. The TACC3/ch-TOG/clathrin complex is required for the maintenance of kinetochore fiber tension. Enhances the strength of NDC80 complex-mediated kinetochore-tip microtubule attachments. The chain is Cytoskeleton-associated protein 5 from Mus musculus (Mouse).